A 293-amino-acid chain; its full sequence is Mitochondrial glycine transporter (293 aa).

Solcar repeat units lie at residues 6-85, 102-186, and 208-291; these read GGVP…SRSA, LQSY…AKEM, and ASAM…LLKL. Helical transmembrane passes span 12-37, 60-86, 108-133, 161-184, 212-238, and 266-284; these read LVSGFFGGLASVCALQPLDLLKTRLQ, GTLPSALRTSIGSALYLSLLNYSRSAL, LLTGALSRAAVGLVTMPITVIKVRYE, GAAATTLRDAPYAGLYVLLYEQAK, VNGVSAFLSASLATTLTAPFDTIKTRM, and GLSLRLCRKAMSACIAWGI.

This sequence belongs to the mitochondrial carrier (TC 2.A.29) family. SLC25A38 subfamily.

Its subcellular location is the mitochondrion inner membrane. It catalyses the reaction glycine(in) = glycine(out). Functionally, mitochondrial glycine transporter that imports glycine into the mitochondrial matrix. Plays an important role in providing glycine for the first enzymatic step in heme biosynthesis, the condensation of glycine with succinyl-CoA to produce 5-aminolevulinate (ALA) in the mitochondrial matrix. The chain is Mitochondrial glycine transporter from Eremothecium gossypii (strain ATCC 10895 / CBS 109.51 / FGSC 9923 / NRRL Y-1056) (Yeast).